A 218-amino-acid chain; its full sequence is Small ribosomal subunit protein uS3c (218 aa).

The 72-residue stretch at 47 to 118 folds into the KH type-2 domain; that stretch reads VQKNIRISSG…KLNIAITRIS (72 aa).

This sequence belongs to the universal ribosomal protein uS3 family. Part of the 30S ribosomal subunit.

The protein localises to the plastid. It localises to the chloroplast. The sequence is that of Small ribosomal subunit protein uS3c (rps3) from Arabis hirsuta (Hairy rock-cress).